The following is a 137-amino-acid chain: Large ribosomal subunit protein uL16 (137 aa).

A compositionally biased stretch (basic residues) spans 1–17 (MLSPKRTKFRKQQRGRM). Residues 1 to 24 (MLSPKRTKFRKQQRGRMRGNANSG) form a disordered region.

Belongs to the universal ribosomal protein uL16 family. As to quaternary structure, part of the 50S ribosomal subunit.

Functionally, binds 23S rRNA and is also seen to make contacts with the A and possibly P site tRNAs. This Trichodesmium erythraeum (strain IMS101) protein is Large ribosomal subunit protein uL16.